The primary structure comprises 356 residues: S-adenosylmethionine:tRNA ribosyltransferase-isomerase (356 aa).

It belongs to the QueA family. Monomer.

The protein resides in the cytoplasm. It catalyses the reaction 7-aminomethyl-7-carbaguanosine(34) in tRNA + S-adenosyl-L-methionine = epoxyqueuosine(34) in tRNA + adenine + L-methionine + 2 H(+). Its pathway is tRNA modification; tRNA-queuosine biosynthesis. Functionally, transfers and isomerizes the ribose moiety from AdoMet to the 7-aminomethyl group of 7-deazaguanine (preQ1-tRNA) to give epoxyqueuosine (oQ-tRNA). The polypeptide is S-adenosylmethionine:tRNA ribosyltransferase-isomerase (Escherichia coli (strain 55989 / EAEC)).